A 288-amino-acid polypeptide reads, in one-letter code: Elongation factor Ts (288 aa).

Residues 79 to 82 (TDFV) are involved in Mg(2+) ion dislocation from EF-Tu.

Belongs to the EF-Ts family.

The protein localises to the cytoplasm. Functionally, associates with the EF-Tu.GDP complex and induces the exchange of GDP to GTP. It remains bound to the aminoacyl-tRNA.EF-Tu.GTP complex up to the GTP hydrolysis stage on the ribosome. This is Elongation factor Ts from Ehrlichia ruminantium (strain Welgevonden).